Here is a 363-residue protein sequence, read N- to C-terminus: tRNA (guanine(26)-N(2))-dimethyltransferase (363 aa).

Positions 5 to 352 (VLRREGGVKF…GEYGEVLMAF (348 aa)) constitute a Trm1 methyltransferase domain. S-adenosyl-L-methionine contacts are provided by Arg40, Arg67, Asp85, Asp111, and Ala112.

Belongs to the class I-like SAM-binding methyltransferase superfamily. Trm1 family.

The catalysed reaction is guanosine(26) in tRNA + 2 S-adenosyl-L-methionine = N(2)-dimethylguanosine(26) in tRNA + 2 S-adenosyl-L-homocysteine + 2 H(+). In terms of biological role, dimethylates a single guanine residue at position 26 of a number of tRNAs using S-adenosyl-L-methionine as donor of the methyl groups. The sequence is that of tRNA (guanine(26)-N(2))-dimethyltransferase from Pyrobaculum aerophilum (strain ATCC 51768 / DSM 7523 / JCM 9630 / CIP 104966 / NBRC 100827 / IM2).